Consider the following 242-residue polypeptide: Pyridoxine 5'-phosphate synthase (242 aa).

3-amino-2-oxopropyl phosphate is bound at residue N7. 9–10 contributes to the 1-deoxy-D-xylulose 5-phosphate binding site; sequence DH. Residue R18 coordinates 3-amino-2-oxopropyl phosphate. H43 acts as the Proton acceptor in catalysis. The 1-deoxy-D-xylulose 5-phosphate site is built by R45 and H50. The active-site Proton acceptor is E70. T100 is a binding site for 1-deoxy-D-xylulose 5-phosphate. H191 serves as the catalytic Proton donor. 3-amino-2-oxopropyl phosphate is bound by residues G192 and 213–214; that span reads GH.

Belongs to the PNP synthase family. In terms of assembly, homooctamer; tetramer of dimers.

Its subcellular location is the cytoplasm. It catalyses the reaction 3-amino-2-oxopropyl phosphate + 1-deoxy-D-xylulose 5-phosphate = pyridoxine 5'-phosphate + phosphate + 2 H2O + H(+). The protein operates within cofactor biosynthesis; pyridoxine 5'-phosphate biosynthesis; pyridoxine 5'-phosphate from D-erythrose 4-phosphate: step 5/5. Catalyzes the complicated ring closure reaction between the two acyclic compounds 1-deoxy-D-xylulose-5-phosphate (DXP) and 3-amino-2-oxopropyl phosphate (1-amino-acetone-3-phosphate or AAP) to form pyridoxine 5'-phosphate (PNP) and inorganic phosphate. The chain is Pyridoxine 5'-phosphate synthase from Chromobacterium violaceum (strain ATCC 12472 / DSM 30191 / JCM 1249 / CCUG 213 / NBRC 12614 / NCIMB 9131 / NCTC 9757 / MK).